We begin with the raw amino-acid sequence, 327 residues long: Type II methyltransferase M.HhaI (327 aa).

The region spanning 12–325 is the SAM-dependent MTase C5-type domain; it reads LRFIDLFAGL…YNIGSSLNFK (314 aa). Cys-81 is a catalytic residue.

It belongs to the class I-like SAM-binding methyltransferase superfamily. C5-methyltransferase family. Monomer.

It catalyses the reaction a 2'-deoxycytidine in DNA + S-adenosyl-L-methionine = a 5-methyl-2'-deoxycytidine in DNA + S-adenosyl-L-homocysteine + H(+). A methylase, recognizes the double-stranded sequence 5'-GCGC-3', methylates C-2 on both strands, and protects the DNA from cleavage by the HhaI endonuclease. The protein is Type II methyltransferase M.HhaI (hhaIM) of Haemophilus parahaemolyticus.